The following is a 130-amino-acid chain: Leptin receptor gene-related protein (130 aa).

Transmembrane regions (helical) follow at residues 7–27, 32–52, 68–88, and 99–119; these read LVAL…GCAL, QYWP…NLIA, LAYF…VVLA, and GLVM…FLIF.

Belongs to the OB-RGRP/VPS55 family.

It localises to the golgi apparatus membrane. The protein localises to the endosome membrane. In terms of biological role, involved in protein trafficking. May be involved in the down-regulation of membrane protein levels. This chain is Leptin receptor gene-related protein (leprot), found in Danio rerio (Zebrafish).